The sequence spans 250 residues: 26 kDa periplasmic immunogenic protein (250 aa).

Residues 1–28 (MNTRASNFLAASFSTIMLVGAFSLPAFA) form the signal peptide.

The protein resides in the periplasm. The chain is 26 kDa periplasmic immunogenic protein (bp26) from Brucella melitensis biotype 1 (strain ATCC 23456 / CCUG 17765 / NCTC 10094 / 16M).